We begin with the raw amino-acid sequence, 512 residues long: Probable malate:quinone oxidoreductase (512 aa).

The protein belongs to the MQO family. FAD serves as cofactor.

It carries out the reaction (S)-malate + a quinone = a quinol + oxaloacetate. It functions in the pathway carbohydrate metabolism; tricarboxylic acid cycle; oxaloacetate from (S)-malate (quinone route): step 1/1. The chain is Probable malate:quinone oxidoreductase from Bradyrhizobium diazoefficiens (strain JCM 10833 / BCRC 13528 / IAM 13628 / NBRC 14792 / USDA 110).